The chain runs to 371 residues: Bifunctional chorismate mutase/prephenate dehydratase (371 aa).

The Chorismate mutase domain maps to 1–92 (MTLKNALLAF…DSVLTQKKWI (92 aa)). Residues arginine 11, arginine 28, lysine 39, aspartate 48, glutamate 52, serine 84, and glutamine 88 each coordinate substrate. Positions 104–284 (KISFLGSFGS…NITQFIILAQ (181 aa)) constitute a Prephenate dehydratase domain. The segment at 285 to 371 (KKTYITNKKT…IKCIKILGCF (87 aa)) is regulatory.

It localises to the cytoplasm. The enzyme catalyses chorismate = prephenate. It carries out the reaction prephenate + H(+) = 3-phenylpyruvate + CO2 + H2O. Its pathway is amino-acid biosynthesis; L-phenylalanine biosynthesis; phenylpyruvate from prephenate: step 1/1. It functions in the pathway metabolic intermediate biosynthesis; prephenate biosynthesis; prephenate from chorismate: step 1/1. Functionally, catalyzes the Claisen rearrangement of chorismate to prephenate and the decarboxylation/dehydration of prephenate to phenylpyruvate. The chain is Bifunctional chorismate mutase/prephenate dehydratase (pheA) from Buchnera aphidicola subsp. Baizongia pistaciae (strain Bp).